Reading from the N-terminus, the 542-residue chain is CTP synthase (542 aa).

Residues 1–265 form an amidoligase domain region; it reads MTRYIFVTGG…DDFVVERFGL (265 aa). Ser13 lines the CTP pocket. Ser13 lines the UTP pocket. ATP is bound by residues 14 to 19 and Asp71; that span reads SLGKGI. Mg(2+) is bound by residues Asp71 and Glu139. CTP-binding positions include 146 to 148, 186 to 191, and Lys222; these read DIE and KTKPTQ. UTP-binding positions include 186 to 191 and Lys222; that span reads KTKPTQ. Residues 290–541 enclose the Glutamine amidotransferase type-1 domain; that stretch reads TIAMVGKYME…VKAALAQKNK (252 aa). Gly351 is an L-glutamine binding site. The Nucleophile; for glutamine hydrolysis role is filled by Cys378. L-glutamine is bound by residues 379–382, Glu402, and Arg469; that span reads LGMQ. Catalysis depends on residues His514 and Glu516.

This sequence belongs to the CTP synthase family. As to quaternary structure, homotetramer.

It catalyses the reaction UTP + L-glutamine + ATP + H2O = CTP + L-glutamate + ADP + phosphate + 2 H(+). It carries out the reaction L-glutamine + H2O = L-glutamate + NH4(+). The catalysed reaction is UTP + NH4(+) + ATP = CTP + ADP + phosphate + 2 H(+). It participates in pyrimidine metabolism; CTP biosynthesis via de novo pathway; CTP from UDP: step 2/2. Allosterically activated by GTP, when glutamine is the substrate; GTP has no effect on the reaction when ammonia is the substrate. The allosteric effector GTP functions by stabilizing the protein conformation that binds the tetrahedral intermediate(s) formed during glutamine hydrolysis. Inhibited by the product CTP, via allosteric rather than competitive inhibition. Catalyzes the ATP-dependent amination of UTP to CTP with either L-glutamine or ammonia as the source of nitrogen. Regulates intracellular CTP levels through interactions with the four ribonucleotide triphosphates. The sequence is that of CTP synthase from Pseudomonas putida (strain W619).